A 285-amino-acid polypeptide reads, in one-letter code: Cyclin-Y-like protein 1B (285 aa).

Residues 111–209 (PKRNCIFRHF…CFLELLEFNI (99 aa)) form the Cyclin N-terminal domain.

This sequence belongs to the cyclin family. Cyclin Y subfamily.

The polypeptide is Cyclin-Y-like protein 1B (Homo sapiens (Human)).